Reading from the N-terminus, the 173-residue chain is Translation initiation factor IF-3 (173 aa).

Belongs to the IF-3 family. As to quaternary structure, monomer.

Its subcellular location is the cytoplasm. Its function is as follows. IF-3 binds to the 30S ribosomal subunit and shifts the equilibrium between 70S ribosomes and their 50S and 30S subunits in favor of the free subunits, thus enhancing the availability of 30S subunits on which protein synthesis initiation begins. This is Translation initiation factor IF-3 from Methylobacterium radiotolerans (strain ATCC 27329 / DSM 1819 / JCM 2831 / NBRC 15690 / NCIMB 10815 / 0-1).